A 78-amino-acid chain; its full sequence is MSDFWHKLGCCVVEKPQPKKRRRRIDRSMIGEPMNFVHLTHIGSGDMAAGEGLPMTGAVQEMRSKGGRERQWSSSRVL.

2 S-palmitoyl cysteine lipidation sites follow: cysteine 10 and cysteine 11. Positions 30-43 (IGEPMNFVHLTHIG) constitute a CRIB domain.

This sequence belongs to the CDC42SE/SPEC family.

The protein resides in the cytoplasm. The protein localises to the cytoskeleton. It localises to the cell membrane. In terms of biological role, probably involved in the organization of the actin cytoskeleton by acting downstream of CDC42, inducing actin filament assembly. This is CDC42 small effector protein 1 (CDC42SE1) from Gallus gallus (Chicken).